The following is a 120-amino-acid chain: NAD(P)H-quinone oxidoreductase subunit 3, chloroplastic (120 aa).

Transmembrane regions (helical) follow at residues 9–29 (IFWA…LISG), 64–84 (MFAL…PWAM), and 88–108 (VLGV…IVGL).

This sequence belongs to the complex I subunit 3 family. As to quaternary structure, NDH is composed of at least 16 different subunits, 5 of which are encoded in the nucleus.

The protein resides in the plastid. It is found in the chloroplast thylakoid membrane. The enzyme catalyses a plastoquinone + NADH + (n+1) H(+)(in) = a plastoquinol + NAD(+) + n H(+)(out). It catalyses the reaction a plastoquinone + NADPH + (n+1) H(+)(in) = a plastoquinol + NADP(+) + n H(+)(out). NDH shuttles electrons from NAD(P)H:plastoquinone, via FMN and iron-sulfur (Fe-S) centers, to quinones in the photosynthetic chain and possibly in a chloroplast respiratory chain. The immediate electron acceptor for the enzyme in this species is believed to be plastoquinone. Couples the redox reaction to proton translocation, and thus conserves the redox energy in a proton gradient. The chain is NAD(P)H-quinone oxidoreductase subunit 3, chloroplastic from Populus alba (White poplar).